Here is a 292-residue protein sequence, read N- to C-terminus: uncharacterized protein (292 aa).

4 consecutive transmembrane segments (helical) span residues 17–37 (LFYT…FPAL), 135–155 (LIAV…IGQL), 166–186 (TTLW…YDIV), and 216–236 (FHGV…TALY). The tract at residues 267 to 292 (EKSEDKKSIVTSRIEEENEDEISDYE) is disordered. The segment covering 282–292 (EENEDEISDYE) has biased composition (acidic residues).

The protein resides in the membrane. This is an uncharacterized protein from Caenorhabditis elegans.